Consider the following 226-residue polypeptide: MLLQNIPAIAVVLKDKDVLSIPKEELKGADLIELRVDMFEKTENISDIFETAKRKYNLPLLCTIRLPEEGGKREIKNRVEIYQAVIPFCNFFDIEIFSNEAPFLRQLSIKNNITLIGSYHNFINTPSMEQLEEVFDRGKTMGMDIIKIATMVNEKKDIETLLYFTLRHKLDRIIVLGMGQKGIPSRIINPVFGSMITYASLNEISAPGQIHLKDMVHIFKVMGLRG.

3-dehydroquinate is bound by residues 33–35 (ELR) and Arg-65. The active-site Proton donor/acceptor is His-120. Lys-147 functions as the Schiff-base intermediate with substrate in the catalytic mechanism. The 3-dehydroquinate site is built by Arg-186, Ser-205, and Gln-209.

It belongs to the type-I 3-dehydroquinase family. Homodimer.

It carries out the reaction 3-dehydroquinate = 3-dehydroshikimate + H2O. It functions in the pathway metabolic intermediate biosynthesis; chorismate biosynthesis; chorismate from D-erythrose 4-phosphate and phosphoenolpyruvate: step 3/7. Functionally, involved in the third step of the chorismate pathway, which leads to the biosynthesis of aromatic amino acids. Catalyzes the cis-dehydration of 3-dehydroquinate (DHQ) and introduces the first double bond of the aromatic ring to yield 3-dehydroshikimate. The protein is 3-dehydroquinate dehydratase of Thermodesulfovibrio yellowstonii (strain ATCC 51303 / DSM 11347 / YP87).